The following is a 130-amino-acid chain: Lysozyme C (130 aa).

One can recognise a C-type lysozyme domain in the interval 2–130; sequence KVYGRCELAA…VNVWIRGCRL (129 aa). Disulfide bonds link Cys7–Cys128, Cys31–Cys116, Cys65–Cys81, and Cys77–Cys95. Active-site residues include Glu36 and Asp53.

Belongs to the glycosyl hydrolase 22 family. As to quaternary structure, monomer.

The protein localises to the secreted. It carries out the reaction Hydrolysis of (1-&gt;4)-beta-linkages between N-acetylmuramic acid and N-acetyl-D-glucosamine residues in a peptidoglycan and between N-acetyl-D-glucosamine residues in chitodextrins.. In terms of biological role, lysozymes have primarily a bacteriolytic function; those in tissues and body fluids are associated with the monocyte-macrophage system and enhance the activity of immunoagents. This is Lysozyme C (LYZ) from Phasianus versicolor (Green pheasant).